Consider the following 363-residue polypeptide: Aminomethyltransferase (363 aa).

This sequence belongs to the GcvT family. The glycine cleavage system is composed of four proteins: P, T, L and H.

It catalyses the reaction N(6)-[(R)-S(8)-aminomethyldihydrolipoyl]-L-lysyl-[protein] + (6S)-5,6,7,8-tetrahydrofolate = N(6)-[(R)-dihydrolipoyl]-L-lysyl-[protein] + (6R)-5,10-methylene-5,6,7,8-tetrahydrofolate + NH4(+). The glycine cleavage system catalyzes the degradation of glycine. The protein is Aminomethyltransferase of Nitrosomonas eutropha (strain DSM 101675 / C91 / Nm57).